The primary structure comprises 663 residues: Ankyrin repeat and SAM domain-containing protein 3 (663 aa).

Residues 1-421 (MSELSDEASE…PGSEPQAEKS (421 aa)) form an interaction with NEK7 region. Ser-2 and Ser-5 each carry phosphoserine. 6 ANK repeats span residues 34-64 (DVPL…DLNK), 68-97 (GGWT…SVNV), 101-130 (EGQT…ELEM), 134-163 (QGWT…NANV), 168-197 (YGFT…KVDT), and 201-220 (SGAT…IVAL). 3-hydroxyasparagine is present on Asn-96. Phosphoserine is present on residues Ser-201, Ser-225, Ser-243, Ser-244, and Ser-245. 2 disordered regions span residues 242–261 (LSSS…CRKK) and 278–425 (TGLG…PYSG). Thr-318 carries the phosphothreonine modification. Residue Ser-319 is modified to Phosphoserine. Basic and acidic residues predominate over residues 322–337 (NERDVESSSSSSREEP). Residues Ser-366, Ser-369, and Ser-373 each carry the phosphoserine modification. The segment covering 378-395 (KSSVRKQTRTYLKNKSRH) has biased composition (basic residues). In terms of domain architecture, SAM spans 424–487 (SGPQDLATLL…TSAIARWHSS (64 aa)). Residues 500–575 (ADRLEAEMQE…AALVLDQLRA (76 aa)) are a coiled coil. Phosphoserine is present on Ser-540. Disordered stretches follow at residues 585 to 604 (KQHH…PADS) and 637 to 663 (AEPG…SDVG). The segment covering 641–651 (ETTDAEWEEME) has biased composition (acidic residues). The span at 654–663 (IARRDDSDVG) shows a compositional bias: basic and acidic residues.

Homooligomer. Interacts (via SAM domain) with ANKS6 (via SAM domain). Interacts with BICC1. Interacts with NPHP1. Interacts with NEK8. Interacts with HIF1AN. Interacts with NEK7; this interaction alters the subcellular distribution of NEK7 by preventing its nuclear translocation. In terms of processing, hydroxylated at Asn-96, most probably by HIF1AN. Post-translationally, phosphorylations at Ser-5, Ser-225, Thr-318, Ser-319, Ser-366 and Ser-369 occur in a NEK7-dependent manner. Polyubiquitinated.

The protein resides in the cell projection. The protein localises to the cilium. It localises to the cytoplasm. May be involved in vasopressin signaling in the kidney. The protein is Ankyrin repeat and SAM domain-containing protein 3 (Anks3) of Rattus norvegicus (Rat).